The chain runs to 1299 residues: DNA-directed RNA polymerase subunit beta' (1299 aa).

Residues Cys60, Cys62, Cys75, and Cys78 each contribute to the Zn(2+) site. The Mg(2+) site is built by Asp535, Asp537, and Asp539. Positions 877, 954, 961, and 964 each coordinate Zn(2+).

Belongs to the RNA polymerase beta' chain family. As to quaternary structure, the RNAP catalytic core consists of 2 alpha, 1 beta, 1 beta' and 1 omega subunit. When a sigma factor is associated with the core the holoenzyme is formed, which can initiate transcription. Requires Mg(2+) as cofactor. Zn(2+) serves as cofactor.

The catalysed reaction is RNA(n) + a ribonucleoside 5'-triphosphate = RNA(n+1) + diphosphate. In terms of biological role, DNA-dependent RNA polymerase catalyzes the transcription of DNA into RNA using the four ribonucleoside triphosphates as substrates. The chain is DNA-directed RNA polymerase subunit beta' from Renibacterium salmoninarum (strain ATCC 33209 / DSM 20767 / JCM 11484 / NBRC 15589 / NCIMB 2235).